Consider the following 252-residue polypeptide: Trans-aconitate 2-methyltransferase (252 aa).

It belongs to the methyltransferase superfamily. Tam family.

The protein localises to the cytoplasm. It carries out the reaction trans-aconitate + S-adenosyl-L-methionine = (E)-3-(methoxycarbonyl)pent-2-enedioate + S-adenosyl-L-homocysteine. In terms of biological role, catalyzes the S-adenosylmethionine monomethyl esterification of trans-aconitate. The chain is Trans-aconitate 2-methyltransferase from Escherichia coli O6:H1 (strain CFT073 / ATCC 700928 / UPEC).